The following is a 330-amino-acid chain: Phenylalanine--tRNA ligase alpha subunit (330 aa).

E254 is a binding site for Mg(2+).

It belongs to the class-II aminoacyl-tRNA synthetase family. Phe-tRNA synthetase alpha subunit type 1 subfamily. As to quaternary structure, tetramer of two alpha and two beta subunits. It depends on Mg(2+) as a cofactor.

The protein resides in the cytoplasm. The enzyme catalyses tRNA(Phe) + L-phenylalanine + ATP = L-phenylalanyl-tRNA(Phe) + AMP + diphosphate + H(+). This chain is Phenylalanine--tRNA ligase alpha subunit (pheS), found in Neisseria meningitidis serogroup A / serotype 4A (strain DSM 15465 / Z2491).